We begin with the raw amino-acid sequence, 160 residues long: Ribosome-binding factor A (160 aa).

A compositionally biased stretch (basic and acidic residues) spans 112–122 (KARQSDEKVRE). A disordered region spans residues 112 to 160 (KARQSDEKVREASAGATYAGEADPYRKPDEDETDTEGAVEADETDDTAK). Over residues 141–160 (EDETDTEGAVEADETDDTAK) the composition is skewed to acidic residues.

The protein belongs to the RbfA family. Monomer. Binds 30S ribosomal subunits, but not 50S ribosomal subunits or 70S ribosomes.

The protein localises to the cytoplasm. In terms of biological role, one of several proteins that assist in the late maturation steps of the functional core of the 30S ribosomal subunit. Associates with free 30S ribosomal subunits (but not with 30S subunits that are part of 70S ribosomes or polysomes). Required for efficient processing of 16S rRNA. May interact with the 5'-terminal helix region of 16S rRNA. This Streptomyces coelicolor (strain ATCC BAA-471 / A3(2) / M145) protein is Ribosome-binding factor A.